Reading from the N-terminus, the 449-residue chain is Bifunctional protein GlmU (449 aa).

A pyrophosphorylase region spans residues 1 to 225 (MLSVAILAAG…NGELQGINNR (225 aa)). UDP-N-acetyl-alpha-D-glucosamine is bound by residues 7–10 (LAAG), Lys-21, Gln-73, and 78–79 (GT). Asp-103 provides a ligand contact to Mg(2+). The UDP-N-acetyl-alpha-D-glucosamine site is built by Gly-140, Glu-154, Asn-169, and Asn-223. Mg(2+) is bound at residue Asn-223. Residues 226–246 (IQLSKCEEIIQNSIKEKHMLN) are linker. The segment at 247–449 (GVTFINQASC…NIDNWERKKP (203 aa)) is N-acetyltransferase. UDP-N-acetyl-alpha-D-glucosamine is bound by residues Arg-328 and Lys-346. His-358 acts as the Proton acceptor in catalysis. Tyr-361 and Asn-372 together coordinate UDP-N-acetyl-alpha-D-glucosamine. 3 residues coordinate acetyl-CoA: Ala-375, Ala-418, and Arg-435.

The protein in the N-terminal section; belongs to the N-acetylglucosamine-1-phosphate uridyltransferase family. This sequence in the C-terminal section; belongs to the transferase hexapeptide repeat family. As to quaternary structure, homotrimer. The cofactor is Mg(2+).

It localises to the cytoplasm. It carries out the reaction alpha-D-glucosamine 1-phosphate + acetyl-CoA = N-acetyl-alpha-D-glucosamine 1-phosphate + CoA + H(+). The enzyme catalyses N-acetyl-alpha-D-glucosamine 1-phosphate + UTP + H(+) = UDP-N-acetyl-alpha-D-glucosamine + diphosphate. Its pathway is nucleotide-sugar biosynthesis; UDP-N-acetyl-alpha-D-glucosamine biosynthesis; N-acetyl-alpha-D-glucosamine 1-phosphate from alpha-D-glucosamine 6-phosphate (route II): step 2/2. It functions in the pathway nucleotide-sugar biosynthesis; UDP-N-acetyl-alpha-D-glucosamine biosynthesis; UDP-N-acetyl-alpha-D-glucosamine from N-acetyl-alpha-D-glucosamine 1-phosphate: step 1/1. The protein operates within bacterial outer membrane biogenesis; LPS lipid A biosynthesis. Catalyzes the last two sequential reactions in the de novo biosynthetic pathway for UDP-N-acetylglucosamine (UDP-GlcNAc). The C-terminal domain catalyzes the transfer of acetyl group from acetyl coenzyme A to glucosamine-1-phosphate (GlcN-1-P) to produce N-acetylglucosamine-1-phosphate (GlcNAc-1-P), which is converted into UDP-GlcNAc by the transfer of uridine 5-monophosphate (from uridine 5-triphosphate), a reaction catalyzed by the N-terminal domain. This Prochlorococcus marinus (strain MIT 9312) protein is Bifunctional protein GlmU.